Consider the following 323-residue polypeptide: Sphingolipid delta(4)-desaturase DES1 (323 aa).

The next 2 membrane-spanning stretches (helical) occupy residues Tyr41 to Val61 and Trp68 to Ile88. The Histidine box-1 signature appears at His89–His93. Residues Ala102–Ile122 form a helical membrane-spanning segment. Positions His128–His132 match the Histidine box-2 motif. 3 helical membrane passes run Lys159–Pro179, Leu185–Gly205, and Ile209–Phe229. The Histidine box-3 motif lies at His259–His263.

Belongs to the fatty acid desaturase type 1 family. DEGS subfamily. Interacts with RLBP1; the interaction increases synthesis of chromophore-precursors by DEGS1. Expressed in retina and retinal pigment epithelium by Mueller cells (at protein level).

It is found in the endoplasmic reticulum membrane. The catalysed reaction is an N-acylsphinganine + 2 Fe(II)-[cytochrome b5] + O2 + 2 H(+) = an N-acylsphing-4-enine + 2 Fe(III)-[cytochrome b5] + 2 H2O. It carries out the reaction all-trans-retinol = 11-cis-retinol. It catalyses the reaction all-trans-retinol = 9-cis-retinol. The enzyme catalyses all-trans-retinol = 13-cis-retinol. The catalysed reaction is 11-cis-retinol = 13-cis-retinol. It carries out the reaction 11-cis-retinol = 9-cis-retinol. Its function is as follows. Has sphingolipid-delta-4-desaturase activity. Converts D-erythro-sphinganine to D-erythro-sphingosine (E-sphing-4-enine). Catalyzes the equilibrium isomerization of retinols. This Gallus gallus (Chicken) protein is Sphingolipid delta(4)-desaturase DES1 (DEGS1).